Reading from the N-terminus, the 230-residue chain is ATP synthase subunit a (230 aa).

5 consecutive transmembrane segments (helical) span residues 17 to 37 (LPIT…FIMA), 78 to 98 (IFPF…IGVI), 107 to 127 (DLSV…WFGI), 165 to 187 (LFGN…GFLV), and 198 to 218 (EAII…AGGI).

It belongs to the ATPase A chain family. In terms of assembly, F-type ATPases have 2 components, CF(1) - the catalytic core - and CF(0) - the membrane proton channel. CF(1) has five subunits: alpha(3), beta(3), gamma(1), delta(1), epsilon(1). CF(0) has three main subunits: a(1), b(2) and c(9-12). The alpha and beta chains form an alternating ring which encloses part of the gamma chain. CF(1) is attached to CF(0) by a central stalk formed by the gamma and epsilon chains, while a peripheral stalk is formed by the delta and b chains.

Its subcellular location is the cell inner membrane. Its function is as follows. Key component of the proton channel; it plays a direct role in the translocation of protons across the membrane. This chain is ATP synthase subunit a, found in Legionella pneumophila (strain Corby).